A 581-amino-acid chain; its full sequence is Potassium-transporting ATPase potassium-binding subunit (581 aa).

12 consecutive transmembrane segments (helical) span residues 2-22 (LQGW…TPFF), 74-94 (AVIA…PLNP), 135-155 (GLGY…IAFI), 177-197 (ILLP…VPET), 255-275 (LVQL…YGVF), 284-304 (LIYL…AIGE), 332-352 (WAQS…AVIA), 357-377 (LMPN…VFGG), 381-401 (GTAY…LMVG), 421-441 (FLIL…ALAF), 501-521 (LSAC…LLLL), and 550-570 (AGVI…LGPI).

This sequence belongs to the KdpA family. As to quaternary structure, the system is composed of three essential subunits: KdpA, KdpB and KdpC.

Its subcellular location is the cell inner membrane. Part of the high-affinity ATP-driven potassium transport (or Kdp) system, which catalyzes the hydrolysis of ATP coupled with the electrogenic transport of potassium into the cytoplasm. This subunit binds the periplasmic potassium ions and delivers the ions to the membrane domain of KdpB through an intramembrane tunnel. This Microcystis aeruginosa (strain NIES-843 / IAM M-2473) protein is Potassium-transporting ATPase potassium-binding subunit.